The sequence spans 489 residues: Beta-dihydromenaquinone-9 omega-hydroxylase (489 aa).

Heme is bound at residue C435.

This sequence belongs to the cytochrome P450 family. Heme is required as a cofactor.

It localises to the cytoplasm. The catalysed reaction is beta-dihydromenaquinone-9 + 2 reduced [2Fe-2S]-[ferredoxin] + O2 + 2 H(+) = omega-hydroxy-beta-dihydromenaquinone-9 + 2 oxidized [2Fe-2S]-[ferredoxin] + H2O. Involved in the biosynthesis of sulfomenaquinone (SMK, initially named S881 on the basis of its mass), which is localized in the outer envelope of M.bovis and negatively regulates its virulence. Catalyzes the hydroxylation of beta-dihydromenaquinone-9, leading to the formation of omega-hydroxy-beta-dihydromenaquinone-9. The chain is Beta-dihydromenaquinone-9 omega-hydroxylase (cyp128) from Mycobacterium bovis (strain ATCC BAA-935 / AF2122/97).